The chain runs to 69 residues: M-poneratoxin-Dq4e (69 aa).

An N-terminal signal peptide occupies residues 1 to 25 (MKLSAFTLAFALILMMAIMYNMAEA). Residues 26–39 (AALADADADAEAIA) constitute a propeptide that is removed on maturation.

In terms of tissue distribution, expressed by the venom gland.

The protein resides in the secreted. Its function is as follows. May have antimicrobial properties, like most ant linear peptides. In addition, when tested in vitro on the parasite Trypanosoma cruzi (responsible of the Chagas disease), is able to moderately reduce the number of the three forms (epimastigote, trypomastigote and amastigote) by inducing cell death through necrosis. The polypeptide is M-poneratoxin-Dq4e (Dinoponera quadriceps (South American ant)).